Consider the following 426-residue polypeptide: Proline--tRNA ligase (426 aa).

It belongs to the class-II aminoacyl-tRNA synthetase family. ProS type 2 subfamily. In terms of assembly, homodimer.

Its subcellular location is the cytoplasm. The enzyme catalyses tRNA(Pro) + L-proline + ATP = L-prolyl-tRNA(Pro) + AMP + diphosphate. In terms of biological role, catalyzes the attachment of proline to tRNA(Pro) in a two-step reaction: proline is first activated by ATP to form Pro-AMP and then transferred to the acceptor end of tRNA(Pro). This is Proline--tRNA ligase from Anaplasma phagocytophilum (strain HZ).